Consider the following 185-residue polypeptide: Glycine-rich cell wall structural protein 2 (185 aa).

A signal peptide spans 1-27 (MATTKHLALAILVLLSIGMTTSARTLL). Residues 149 to 185 (GYGSGGGGGGGGGQGGGSGSGSGSGYGSGSGGGNGHH) form a disordered region.

The protein resides in the secreted. It is found in the cell wall. In terms of biological role, responsible for plasticity of the cell wall. This chain is Glycine-rich cell wall structural protein 2 (GRP0.9), found in Oryza sativa subsp. indica (Rice).